A 150-amino-acid polypeptide reads, in one-letter code: Ribosome maturation factor RimP (150 aa).

Belongs to the RimP family.

The protein resides in the cytoplasm. Required for maturation of 30S ribosomal subunits. The protein is Ribosome maturation factor RimP of Escherichia coli O9:H4 (strain HS).